Here is a 109-residue protein sequence, read N- to C-terminus: Protein reprimo (109 aa).

Asn7 and Asn18 each carry an N-linked (GlcNAc...) asparagine glycan. Residues 56-76 (VVQIAVMCVLSLTVVFGIFFL) traverse the membrane as a helical segment. Ser98 is modified (phosphoserine).

Belongs to the reprimo family.

It localises to the cytoplasm. It is found in the membrane. In terms of biological role, may be involved in the regulation of p53-dependent G2 arrest of the cell cycle. Seems to induce cell cycle arrest by inhibiting CDK1 activity and nuclear translocation of the CDC2 cyclin B1 complex. This is Protein reprimo (RPRM) from Bos taurus (Bovine).